We begin with the raw amino-acid sequence, 728 residues long: 1,4-alpha-glucan branching enzyme GlgB (728 aa).

Asp-405 acts as the Nucleophile in catalysis. Residue Glu-458 is the Proton donor of the active site.

It belongs to the glycosyl hydrolase 13 family. GlgB subfamily. As to quaternary structure, monomer.

It carries out the reaction Transfers a segment of a (1-&gt;4)-alpha-D-glucan chain to a primary hydroxy group in a similar glucan chain.. It participates in glycan biosynthesis; glycogen biosynthesis. Catalyzes the formation of the alpha-1,6-glucosidic linkages in glycogen by scission of a 1,4-alpha-linked oligosaccharide from growing alpha-1,4-glucan chains and the subsequent attachment of the oligosaccharide to the alpha-1,6 position. The sequence is that of 1,4-alpha-glucan branching enzyme GlgB from Escherichia coli O157:H7.